A 700-amino-acid polypeptide reads, in one-letter code: Protein kinase C, eye isozyme (700 aa).

2 consecutive Phorbol-ester/DAG-type zinc fingers follow at residues 71-121 (GHRF…VFKC) and 136-186 (KHGW…PPMC). Positions 189-310 (DISEVRGKLL…LQKEPVDGWY (122 aa)) constitute a C2 domain. Ca(2+) is bound by residues Asp222, Asp228, Asp281, Asp283, Ser286, and Asp289. A Protein kinase domain is found at 371–629 (FNFVKVIGKG…RQEITTHPFF (259 aa)). Residues 377-385 (IGKGSFGKV) and Lys400 contribute to the ATP site. The active-site Proton acceptor is the Asp495. An AGC-kinase C-terminal domain is found at 630 to 700 (RNVDWDKAEA…FMNPEFITII (71 aa)).

Belongs to the protein kinase superfamily. AGC Ser/Thr protein kinase family. PKC subfamily. Requires Ca(2+) as cofactor. As to expression, exclusively expressed in photoreceptor cells.

The catalysed reaction is L-seryl-[protein] + ATP = O-phospho-L-seryl-[protein] + ADP + H(+). It catalyses the reaction L-threonyl-[protein] + ATP = O-phospho-L-threonyl-[protein] + ADP + H(+). Functionally, this is a calcium-activated, phospholipid-dependent, serine- and threonine-specific enzyme. This isozyme is a negative regulator of the visual transduction cascade and has been shown to be required for photoreceptor cell inactivation and light adaptation. Negative regulation is dependent on interaction with scaffolding protein inaD. Acts in a hh-signaling pathway which regulates the Duox-dependent gut immune response to bacterial uracil; required for the activation of Cad99C and consequently Cad99C-dependent endosome formation, which is essential for the Duox-dependent production of reactive oxygen species (ROS) in response to intestinal bacterial infection. This is Protein kinase C, eye isozyme (inaC) from Drosophila melanogaster (Fruit fly).